Here is a 777-residue protein sequence, read N- to C-terminus: Reticulon-1 (777 aa).

Disordered stretches follow at residues 1–77 (MAAP…ETAS), 129–182 (NGHI…ILAD), 198–245 (TRPQ…PVEG), and 293–573 (ATHE…IPGP). Phosphoserine is present on residues S13 and S68. Residues 199 to 233 (RPQEAKGQEEQSPGLEDKDLDFKDKDSEVSTKPEG) are compositionally biased toward basic and acidic residues. A phosphoserine mark is found at S210, S241, and S325. Residues 326 to 339 (PGSVTPPSSGTEPS) are compositionally biased toward low complexity. Residues S348 and S350 each carry the phosphoserine modification. The span at 393–406 (IPSSLDQEASSAES) shows a compositional bias: polar residues. Position 485 is a phosphoserine (S485). Residues 495-510 (AIREETSSRATEERAP) show a composition bias toward basic and acidic residues. A compositionally biased stretch (polar residues) spans 525–534 (TPVTLQSRPE). The 188-residue stretch at 590–777 (AIDLLYWRDI…KIPGAKRHAE (188 aa)) folds into the Reticulon domain. The next 2 membrane-spanning stretches (helical) occupy residues 604–624 (IVFG…VVSV) and 706–726 (FAVL…LTLL).

As to quaternary structure, interacts with NDRG1. Interacts with BACE1. Interacts with TMEM33. Interacts with UGCG; regulates the ceramide glucosyltransferase activity of UGCG. As to expression, expressed predominantly in central and peripheral nervous system of newborn and adult rats. Low levels have been also detected in heart, adrenal gland and spleen. Expression of isoform RTN1-B is restricted to particular neuronal types.

Its subcellular location is the endoplasmic reticulum membrane. The protein resides in the golgi apparatus membrane. In terms of biological role, inhibits amyloid precursor protein processing, probably by blocking BACE1 activity. This Rattus norvegicus (Rat) protein is Reticulon-1 (Rtn1).